Consider the following 553-residue polypeptide: Putative transport protein YidE (553 aa).

Helical transmembrane passes span 4–24, 28–48, 65–85, 95–115, and 158–178; these read IALT…IGNV, GIGL…HFVS, FGLI…FFAS, LFAV…HKLF, and MSYA…MWML. 2 RCK C-terminal domains span residues 191–276 and 279–361; these read QQHE…VIGQ and DTSL…VLGN. Transmembrane regions (helical) follow at residues 371–391, 393–413, 431–448, 464–484, 493–513, and 533–553; these read MLPV…PVFV, GFPA…ALIL, NLAL…VVGL, LSWI…VGIL, YLTM…LAFA, and LVMF…WSIG.

It belongs to the AAE transporter (TC 2.A.81) family. YidE subfamily.

Its subcellular location is the cell membrane. In Shigella sonnei (strain Ss046), this protein is Putative transport protein YidE.